The chain runs to 752 residues: Coiled-coil domain-containing protein 157 (752 aa).

Over residues 135 to 154 (QQPLPQKGANQRETPTSKPT) the composition is skewed to polar residues. Disordered stretches follow at residues 135–163 (QQPL…ARSP) and 316–336 (QALK…EQCL). Coiled coils occupy residues 276-544 (AAEQ…LLVA) and 579-615 (DHME…VAQQ). Over residues 316–329 (QALKQEQGARRRQA) the composition is skewed to basic and acidic residues. 2 disordered regions span residues 620–707 (LIPQ…QPSK) and 731–752 (RKRL…ERPM). Polar residues predominate over residues 628-648 (SPSSKGTQGATPPVQAKSTSP). Positions 671–692 (TSPPRQPCTSPPRQPCTSPPRQ) are enriched in pro residues. Residues 693 to 707 (PCTSPSRQPCSQPSK) show a composition bias toward polar residues.

The sequence is that of Coiled-coil domain-containing protein 157 (CCDC157) from Homo sapiens (Human).